Reading from the N-terminus, the 308-residue chain is Glutathione synthetase (308 aa).

An ATP-grasp domain is found at 117–300 (KLLPLSFPKF…LERDCWDYFE (184 aa)). 143–198 (YAEYGDIVLKPLYDYGGNGVCRICGRADVGAISSAMVERYEAPLVAQQFIDDISSD) contacts ATP. The Mg(2+) site is built by Glu271 and Asn273.

The protein belongs to the prokaryotic GSH synthase family. The cofactor is Mg(2+). Requires Mn(2+) as cofactor.

The enzyme catalyses gamma-L-glutamyl-L-cysteine + glycine + ATP = glutathione + ADP + phosphate + H(+). It functions in the pathway sulfur metabolism; glutathione biosynthesis; glutathione from L-cysteine and L-glutamate: step 2/2. This Anaplasma centrale protein is Glutathione synthetase.